Consider the following 373-residue polypeptide: 4-hydroxy-3-methylbut-2-en-1-yl diphosphate synthase (flavodoxin) (373 aa).

Cys270, Cys273, Cys305, and Glu312 together coordinate [4Fe-4S] cluster.

It belongs to the IspG family. [4Fe-4S] cluster is required as a cofactor.

It catalyses the reaction (2E)-4-hydroxy-3-methylbut-2-enyl diphosphate + oxidized [flavodoxin] + H2O + 2 H(+) = 2-C-methyl-D-erythritol 2,4-cyclic diphosphate + reduced [flavodoxin]. The protein operates within isoprenoid biosynthesis; isopentenyl diphosphate biosynthesis via DXP pathway; isopentenyl diphosphate from 1-deoxy-D-xylulose 5-phosphate: step 5/6. Its function is as follows. Converts 2C-methyl-D-erythritol 2,4-cyclodiphosphate (ME-2,4cPP) into 1-hydroxy-2-methyl-2-(E)-butenyl 4-diphosphate. The protein is 4-hydroxy-3-methylbut-2-en-1-yl diphosphate synthase (flavodoxin) of Vibrio atlanticus (strain LGP32) (Vibrio splendidus (strain Mel32)).